The primary structure comprises 435 residues: Ornithine decarboxylase (435 aa).

K76 bears the N6-(pyridoxal phosphate)lysine mark. Residues S207, G244, and 283–286 (EPGR) contribute to the pyridoxal 5'-phosphate site. 339–340 (FD) contacts substrate. Residue C368 is the Proton donor; shared with dimeric partner of the active site. D369 contributes to the substrate binding site. Position 397 (Y397) interacts with pyridoxal 5'-phosphate.

The protein belongs to the Orn/Lys/Arg decarboxylase class-II family. As to quaternary structure, homodimer. Only the dimer is catalytically active, as the active sites are constructed of residues from both monomers. Pyridoxal 5'-phosphate serves as cofactor.

The catalysed reaction is L-ornithine + H(+) = putrescine + CO2. It participates in amine and polyamine biosynthesis; putrescine biosynthesis via L-ornithine pathway; putrescine from L-ornithine: step 1/1. Its activity is regulated as follows. Inhibited by antizyme (AZ) in response to polyamine levels. AZ inhibits the assembly of the functional homodimer by binding to ODC monomers and targeting them for ubiquitin-independent proteolytic destruction by the 26S proteasome. Functionally, catalyzes the first and rate-limiting step of polyamine biosynthesis that converts ornithine into putrescine, which is the precursor for the polyamines, spermidine and spermine. Polyamines are essential for cell proliferation and are implicated in cellular processes, ranging from DNA replication to apoptosis. In Panagrellus redivivus (Microworm), this protein is Ornithine decarboxylase (ODC).